A 209-amino-acid polypeptide reads, in one-letter code: Ion-translocating oxidoreductase complex subunit G (209 aa).

Residues 9-29 form a helical membrane-spanning segment; that stretch reads GITLALFAAGATGLTAVVNSL. Threonine 175 is modified (FMN phosphoryl threonine).

This sequence belongs to the RnfG family. As to quaternary structure, the complex is composed of six subunits: RnfA, RnfB, RnfC, RnfD, RnfE and RnfG. FMN is required as a cofactor.

Its subcellular location is the cell inner membrane. Functionally, part of a membrane-bound complex that couples electron transfer with translocation of ions across the membrane. The polypeptide is Ion-translocating oxidoreductase complex subunit G (Yersinia pestis).